A 1033-amino-acid chain; its full sequence is Putative U-box domain-containing protein 42 (1033 aa).

The segment at 145–226 (SQSQMTDIPD…SSNASSQRKY (82 aa)) is disordered. Residues 200-226 (LSKSQSQSTEIPDIPSQSSNASSQRKY) are compositionally biased toward polar residues. The region spanning 245-322 (PPYQAFICPL…QEWKVRNEAA (78 aa)) is the U-box domain. ARM repeat units follow at residues 483-522 (PENI…EIDI), 523-562 (GHEK…HISL), 564-608 (HPNN…NILE), 610-659 (GLEH…SLSK), and 665-704 (ATIV…ALTP).

It carries out the reaction S-ubiquitinyl-[E2 ubiquitin-conjugating enzyme]-L-cysteine + [acceptor protein]-L-lysine = [E2 ubiquitin-conjugating enzyme]-L-cysteine + N(6)-ubiquitinyl-[acceptor protein]-L-lysine.. It participates in protein modification; protein ubiquitination. Its function is as follows. Functions as an E3 ubiquitin ligase. This chain is Putative U-box domain-containing protein 42 (PUB42), found in Arabidopsis thaliana (Mouse-ear cress).